The chain runs to 203 residues: Thymidylate kinase (203 aa).

10–17 (GMDGAGKS) contributes to the ATP binding site.

This sequence belongs to the thymidylate kinase family.

It catalyses the reaction dTMP + ATP = dTDP + ADP. Phosphorylation of dTMP to form dTDP in both de novo and salvage pathways of dTTP synthesis. The polypeptide is Thymidylate kinase (Methylobacillus flagellatus (strain ATCC 51484 / DSM 6875 / VKM B-1610 / KT)).